A 201-amino-acid polypeptide reads, in one-letter code: Large ribosomal subunit protein uL4 (201 aa).

The tract at residues 44–68 is disordered; the sequence is KAQKTRSEVAGTTKKSKKQKGGGAR.

This sequence belongs to the universal ribosomal protein uL4 family. Part of the 50S ribosomal subunit.

One of the primary rRNA binding proteins, this protein initially binds near the 5'-end of the 23S rRNA. It is important during the early stages of 50S assembly. It makes multiple contacts with different domains of the 23S rRNA in the assembled 50S subunit and ribosome. Its function is as follows. Forms part of the polypeptide exit tunnel. The chain is Large ribosomal subunit protein uL4 from Xanthomonas campestris pv. campestris (strain 8004).